A 141-amino-acid chain; its full sequence is Hemoglobin subunit alpha-D (141 aa).

Positions valine 1 to arginine 141 constitute a Globin domain. Heme b-binding residues include histidine 58 and histidine 87.

The protein belongs to the globin family. In terms of assembly, there are three forms of hemoglobin in Sphenodon: A, A' and D. Hb A is a tetramer of two alpha-A and two beta-1, Hb A' is a tetramer of two alpha-a and two beta-2, Hb D is a tetramer of two alpha-D and two beta-2. In terms of tissue distribution, red blood cells.

Its function is as follows. Involved in oxygen transport from the lung to the various peripheral tissues. The polypeptide is Hemoglobin subunit alpha-D (HBAD) (Sphenodon punctatus (Tuatara)).